Here is a 274-residue protein sequence, read N- to C-terminus: Large ribosomal subunit protein uL2 (274 aa).

2 disordered regions span residues 34–53 (IAPI…TMRY) and 216–274 (RRPR…RRKK).

The protein belongs to the universal ribosomal protein uL2 family. Part of the 50S ribosomal subunit. Forms a bridge to the 30S subunit in the 70S ribosome.

Functionally, one of the primary rRNA binding proteins. Required for association of the 30S and 50S subunits to form the 70S ribosome, for tRNA binding and peptide bond formation. It has been suggested to have peptidyltransferase activity; this is somewhat controversial. Makes several contacts with the 16S rRNA in the 70S ribosome. This Flavobacterium psychrophilum (strain ATCC 49511 / DSM 21280 / CIP 103535 / JIP02/86) protein is Large ribosomal subunit protein uL2.